Here is a 793-residue protein sequence, read N- to C-terminus: Nuclear cap-binding protein subunit 1 (793 aa).

Positions 28-242 (EKKLQEVIGK…SLSAQIENLR (215 aa)) constitute an MIF4G domain.

Belongs to the NCBP1 family. Component of the nuclear cap-binding complex (CBC), a heterodimer composed of ncbp-1 and ncbp-1 that interacts with m7GpppG-capped RNA.

The protein localises to the nucleus. Its function is as follows. Component of the cap-binding complex (CBC), which binds cotranscriptionally to the 5'-cap of pre-mRNAs and is involved in various processes such as pre-mRNA splicing and RNA-mediated gene silencing (RNAi). The CBC complex is involved in miRNA-mediated RNA interference and is required for primary microRNAs (miRNAs) processing. In the CBC complex, ncbp-1 does not bind directly capped RNAs (m7GpppG-capped RNA) but is required to stabilize the movement of the N-terminal loop of ncbp-2 and lock the CBC into a high affinity cap-binding state with the cap structure. The chain is Nuclear cap-binding protein subunit 1 (ncbp-1) from Caenorhabditis briggsae.